Consider the following 508-residue polypeptide: Carboxypeptidase Y homolog ARB_05721 (508 aa).

The first 25 residues, 1–25 (MELYLNMLSFWYILLATSFFGPSQA), serve as a signal peptide directing secretion. N-linked (GlcNAc...) asparagine glycans are attached at residues asparagine 132 and asparagine 169. The active site involves serine 204. N-linked (GlcNAc...) asparagine glycosylation occurs at asparagine 268. Cystine bridges form between cysteine 282/cysteine 305, cysteine 289/cysteine 298, and cysteine 332/cysteine 338. Aspartate 410 is a catalytic residue. Substrate is bound at residue cysteine 413. Asparagine 451 carries N-linked (GlcNAc...) asparagine glycosylation. Histidine 484 is an active-site residue. Methionine 485 contacts substrate.

This sequence belongs to the peptidase S10 family.

Its subcellular location is the secreted. The enzyme catalyses Release of a C-terminal amino acid with broad specificity.. In terms of biological role, involved in degradation of small peptides. The polypeptide is Carboxypeptidase Y homolog ARB_05721 (Arthroderma benhamiae (strain ATCC MYA-4681 / CBS 112371) (Trichophyton mentagrophytes)).